A 63-amino-acid chain; its full sequence is 2-hydroxymuconate tautomerase (63 aa).

The Proton acceptor; via imino nitrogen role is filled by P2.

The protein belongs to the 4-oxalocrotonate tautomerase family. In terms of assembly, homohexamer.

The enzyme catalyses (2Z,4E)-2-hydroxyhexa-2,4-dienedioate = (3E)-2-oxohex-3-enedioate. Its pathway is aromatic compound metabolism; salicylate degradation. In terms of biological role, catalyzes the ketonization of 2-hydroxymuconate stereoselectively to yield 2-oxo-3-hexenedioate. This Comamonas testosteroni (Pseudomonas testosteroni) protein is 2-hydroxymuconate tautomerase (aphI).